Here is a 159-residue protein sequence, read N- to C-terminus: Endoribonuclease YbeY (159 aa).

Zn(2+) contacts are provided by His-126, His-130, and His-136.

It belongs to the endoribonuclease YbeY family. Requires Zn(2+) as cofactor.

The protein resides in the cytoplasm. Single strand-specific metallo-endoribonuclease involved in late-stage 70S ribosome quality control and in maturation of the 3' terminus of the 16S rRNA. The chain is Endoribonuclease YbeY from Thermodesulfovibrio yellowstonii (strain ATCC 51303 / DSM 11347 / YP87).